Consider the following 303-residue polypeptide: tRNA pseudouridine synthase B (303 aa).

Catalysis depends on aspartate 47, which acts as the Nucleophile.

Belongs to the pseudouridine synthase TruB family. Type 1 subfamily.

It carries out the reaction uridine(55) in tRNA = pseudouridine(55) in tRNA. Its function is as follows. Responsible for synthesis of pseudouridine from uracil-55 in the psi GC loop of transfer RNAs. This is tRNA pseudouridine synthase B from Legionella pneumophila (strain Lens).